The primary structure comprises 771 residues: Transcription factor Sp3 (771 aa).

Disordered stretches follow at residues 1–47 and 60–79; these read MTAP…QDAQ and KIGP…ASHS. Over residues 34 to 47 the composition is skewed to low complexity; that stretch reads ASASAAAAAPQDAQ. Lys109 participates in a covalent cross-link: Glycyl lysine isopeptide (Lys-Gly) (interchain with G-Cter in SUMO). Transactivation domain (Gln-rich) regions lie at residues 129–228 and 341–489; these read QYVL…VQVQ and EQNA…TLGQ. Positions 451-459 match the 9aaTAD motif; the sequence is ITWQTFQVQ. Positions 524–610 are repressor domain; sequence IQLHQGENAG…RGSNLGKKKQ (87 aa). Lys541 carries the post-translational modification N6-acetyllysine; alternate. Lys541 participates in a covalent cross-link: Glycyl lysine isopeptide (Lys-Gly) (interchain with G-Cter in SUMO); alternate. 3 consecutive C2H2-type zinc fingers follow at residues 611 to 635, 641 to 665, and 671 to 693; these read HICH…LRWH, FVCN…RRTH, and FVCP…IKTH.

Belongs to the Sp1 C2H2-type zinc-finger protein family. As to quaternary structure, interacts with HDAC1 and HDAC2; the interaction deacetylates SP3 and regulates its transcriptional activity. Interacts with v-Jun. In terms of processing, acetylated by histone acetyltransferase p300, deacetylated by HDACs. Acetylation/deacetylation states regulate transcriptional activity. Acetylation appears to activate transcription. Alternate sumoylation and acetylation at Lys-541 also control transcriptional activity. Sumoylation represses transcriptional activity. Lys-541 is the major site. Sumoylation at this site promotes nuclear localization to the nuclear periphery, nuclear dots and PML nuclear bodies. Alternate sumoylation and acetylation at Lys-541 also control transcriptional activity.

The protein resides in the nucleus. Its subcellular location is the PML body. In terms of biological role, transcriptional factor that can act as an activator or repressor depending on post-translational modifications. Binds to GT and GC boxes promoter elements. Competes with SP1 for the GC-box promoters. Weak activator of transcription. Required for activation of SPARC transcription. This is Transcription factor Sp3 (SP3) from Gallus gallus (Chicken).